Consider the following 859-residue polypeptide: DNA mismatch repair protein MutS (859 aa).

Residue 617–624 coordinates ATP; sequence GPNMGGKS. The segment at 801-820 is disordered; it reads TSLPHEVAPQAPGKPSVPQQ.

Belongs to the DNA mismatch repair MutS family.

This protein is involved in the repair of mismatches in DNA. It is possible that it carries out the mismatch recognition step. This protein has a weak ATPase activity. The polypeptide is DNA mismatch repair protein MutS (Pseudomonas fluorescens (strain ATCC BAA-477 / NRRL B-23932 / Pf-5)).